The chain runs to 387 residues: Patatin-08 (387 aa).

Positions 1–23 (MATTKSFLILIVMILATTSSTFA) are cleaved as a signal peptide. The region spanning 32 to 230 (LSIDGGGIKG…TVADPALLSI (199 aa)) is the PNPLA domain. Positions 36–41 (GGGIKG) match the GXGXXG motif. Positions 75–79 (GTSTG) match the GXSXG motif. The Nucleophile role is filled by serine 77. An N-linked (GlcNAc...) asparagine glycan is attached at asparagine 115. The active-site Proton acceptor is the aspartate 216. Residues 216–218 (DGA) carry the DGA/G motif. Positions 361-385 (ETYEEALKRFAKLLSDRKKLRANKA) form a coiled coil.

It belongs to the patatin family. As to expression, tuber.

Its subcellular location is the vacuole. Its function is as follows. Probable lipolytic acyl hydrolase (LAH), an activity which is thought to be involved in the response of tubers to pathogens. The protein is Patatin-08 of Solanum tuberosum (Potato).